The primary structure comprises 82 residues: High-potential iron-sulfur protein (82 aa).

4 residues coordinate [4Fe-4S] cluster: cysteine 42, cysteine 45, cysteine 60, and cysteine 74.

This sequence belongs to the high-potential iron-sulfur protein (HiPIP) family. Homodimer.

It localises to the periplasm. In terms of biological role, specific class of high-redox-potential 4Fe-4S ferredoxins. Functions in anaerobic electron transport in most purple and in some other photosynthetic bacteria and in at least one genus (Paracoccus) of halophilic, denitrifying bacteria. The polypeptide is High-potential iron-sulfur protein (hip) (Marichromatium purpuratum (Chromatium purpuratum)).